A 143-amino-acid chain; its full sequence is Transcriptional regulator SlyA (143 aa).

The region spanning 2-135 (ESTLGSDLAR…LSGLIDKLEK (134 aa)) is the HTH marR-type domain. A DNA-binding region (H-T-H motif) is located at residues 49–72 (QIQLAKAIGIEQPSLVRTLDQLEE).

This sequence belongs to the SlyA family. As to quaternary structure, homodimer.

Its function is as follows. Transcription regulator that can specifically activate or repress expression of target genes. The sequence is that of Transcriptional regulator SlyA from Yersinia pestis bv. Antiqua (strain Antiqua).